The chain runs to 547 residues: Immunoglobulin epsilon heavy chain (547 aa).

Residue glutamine 1 is modified to Pyrrolidone carboxylic acid. 5 Ig-like domains span residues 1 to 120, 130 to 223, 232 to 329, 333 to 437, and 443 to 542; these read QVQL…TEVT, PSVF…KTFS, PTVK…KKCA, PRGV…TKTS, and PEVY…RAVS. The segment at 1 to 124 is variable (V) domain, involved in antigen recognition; that stretch reads QVQLVQSGAE…EGTEVTYTVS (124 aa). Disulfide bonds link cysteine 22-cysteine 96, cysteine 139-cysteine 225, cysteine 153-cysteine 207, cysteine 254-cysteine 312, cysteine 358-cysteine 418, and cysteine 464-cysteine 524. The tract at residues 125–547 is constant (C) domain; it reads GAWTLPSVFP…QRAVSVNPGK (423 aa). N-linked (GlcNAc...) asparagine glycans are attached at residues asparagine 145, asparagine 173, asparagine 219, asparagine 265, asparagine 371, asparagine 383, and asparagine 394.

As to quaternary structure, immunoglobulins are composed of two identical heavy chains and two identical light chains; disulfide-linked.

The protein resides in the secreted. It is found in the cell membrane. Functionally, immunoglobulins, also known as antibodies, are membrane-bound or secreted glycoproteins produced by B lymphocytes. In the recognition phase of humoral immunity, the membrane-bound immunoglobulins serve as receptors which, upon binding of a specific antigen, trigger the clonal expansion and differentiation of B lymphocytes into immunoglobulins-secreting plasma cells. Secreted immunoglobulins mediate the effector phase of humoral immunity, which results in the elimination of bound antigens. The antigen binding site is formed by the variable domain of one heavy chain, together with that of its associated light chain. Thus, each immunoglobulin has two antigen binding sites with remarkable affinity for a particular antigen. The variable domains are assembled by a process called V-(D)-J rearrangement and can then be subjected to somatic hypermutations which, after exposure to antigen and selection, allow affinity maturation for a particular antigen. The protein is Immunoglobulin epsilon heavy chain of Homo sapiens (Human).